A 928-amino-acid chain; its full sequence is Eukaryotic translation initiation factor 3 subunit C (928 aa).

Disordered regions lie at residues 1–37 (MSRF…SDDE) and 157–286 (FREA…EDGE). Acidic residues predominate over residues 11-20 (SESESSEEEV). Over residues 22 to 33 (TQFNNKAQNFQF) the composition is skewed to polar residues. Phosphoserine is present on residues serine 34, serine 165, serine 177, and serine 186. Over residues 162 to 171 (DQESDVDEGE) the composition is skewed to acidic residues. Residues 172–184 (GDVHDSDADRAGD) show a composition bias toward basic and acidic residues. The segment covering 215-240 (DDDDSEDSIDWDPDTESETESSEDEN) has biased composition (acidic residues). Residues 245 to 264 (MRERFLKRTTEKEDKDDDKR) are compositionally biased toward basic and acidic residues. The segment covering 265 to 277 (KDKRKEQKHKVRK) has biased composition (basic residues). The 177-residue stretch at 656 to 832 (FHMHINLELL…ETVVMHRSEP (177 aa)) folds into the PCI domain. The segment at 864-928 (FFQRGNMGNR…QQQVHTIDEE (65 aa)) is disordered. The segment covering 898 to 909 (QRNRNQRGHHKQ) has biased composition (basic residues). The segment covering 910-921 (NQQQNQQQQQQQ) has biased composition (low complexity).

Belongs to the eIF-3 subunit C family. As to quaternary structure, component of the eukaryotic translation initiation factor 3 (eIF-3) complex. The eIF-3 complex interacts with pix.

It localises to the cytoplasm. Its function is as follows. Component of the eukaryotic translation initiation factor 3 (eIF-3) complex, which is involved in protein synthesis of a specialized repertoire of mRNAs and, together with other initiation factors, stimulates binding of mRNA and methionyl-tRNAi to the 40S ribosome. The eIF-3 complex specifically targets and initiates translation of a subset of mRNAs involved in cell proliferation. In Drosophila grimshawi (Hawaiian fruit fly), this protein is Eukaryotic translation initiation factor 3 subunit C.